The primary structure comprises 165 residues: Alanine- and arginine-rich domain-containing protein (165 aa).

Residues 136–165 form a disordered region; it reads QQLKKRQDQERASKPQSPQDEEMNPECGNA.

This is Alanine- and arginine-rich domain-containing protein (Aard) from Rattus norvegicus (Rat).